A 417-amino-acid polypeptide reads, in one-letter code: Secreted aspartic protease 4 (417 aa).

An N-terminal signal peptide occupies residues 1–18 (MFLQNILSVLAFALLIDA). Positions 19–75 (APVKRSTGFVTLDFNVKRSLVDPKDPTVEVKRSPLFLDIEPTEIPVDDTGRNDVGKR) are cleaved as a propeptide — activation peptide. One can recognise a Peptidase A1 domain in the interval 89 to 403 (YSADITIGSN…DLDDRKISMA (315 aa)). The active site involves Asp-107. 107–109 (DTG) serves as a coordination point for pepstatin A. A disulfide bridge connects residues Cys-122 and Cys-134. Asn-137 is a glycosylation site (N-linked (GlcNAc...) asparagine). Residue 160–161 (AD) coordinates pepstatin A. A Zn(2+)-binding site is contributed by Asp-267. Asp-293 is an active-site residue. Residue 293 to 297 (DSGTT) participates in pepstatin A binding. A disulfide bridge connects residues Cys-331 and Cys-369.

The protein belongs to the peptidase A1 family. In terms of assembly, monomer.

It is found in the secreted. The enzyme catalyses Preferential cleavage at the carboxyl of hydrophobic amino acids, but fails to cleave 15-Leu-|-Tyr-16, 16-Tyr-|-Leu-17 and 24-Phe-|-Phe-25 of insulin B chain. Activates trypsinogen, and degrades keratin.. Its activity is regulated as follows. Activity is inhibited by squash aspartic peptidase inhibitor (SQAPI). In terms of biological role, secreted aspartic peptidases (SAPs) are a group of ten acidic hydrolases considered as key virulence factors. These enzymes supply the fungus with nutrient amino acids as well as are able to degrade the selected host's proteins involved in the immune defense. Moreover, acts toward human hemoglobin though limited proteolysis to generate a variety of antimicrobial hemocidins, enabling to compete with the other microorganisms of the same physiological niche using the microbicidal peptides generated from the host protein. Functionally, plays a key role in defense against host by cleaving histatin-5 (Hst 5), a peptide from human saliva that carries out fungicidal activity. The cleavage rate decreases in an order of SAP2 &gt; SAP9 &gt; SAP3 &gt; SAP7 &gt; SAP4 &gt; SAP1 &gt; SAP8. The first cleavage occurs between residues 'Lys-17' and 'His-18' of Hst 5, giving DSHAKRHHGYKRKFHEK and HHSHRGY peptides. Simultaneously, the DSHAKRHHGY and KRKFHEKHHSHRGY peptides are also formed. The polypeptide is Secreted aspartic protease 4 (Candida albicans (strain SC5314 / ATCC MYA-2876) (Yeast)).